Consider the following 371-residue polypeptide: DNA replication and repair protein RecF (371 aa).

30–37 (GANAQGKT) lines the ATP pocket.

This sequence belongs to the RecF family.

It localises to the cytoplasm. In terms of biological role, the RecF protein is involved in DNA metabolism; it is required for DNA replication and normal SOS inducibility. RecF binds preferentially to single-stranded, linear DNA. It also seems to bind ATP. The chain is DNA replication and repair protein RecF from Lacticaseibacillus casei (strain BL23) (Lactobacillus casei).